The following is a 287-amino-acid chain: 4-hydroxybenzoate octaprenyltransferase (287 aa).

The next 7 helical transmembrane spans lie at 30-50 (ALWI…FALG), 92-112 (IAIA…LNGL), 133-153 (FFAI…PMAF), 158-178 (DTVP…SVAY), 207-227 (VLAI…LGAA), 232-252 (WPYW…YTLI), and 266-286 (HNNW…ALAV).

It belongs to the UbiA prenyltransferase family. Mg(2+) is required as a cofactor.

It is found in the cell inner membrane. It carries out the reaction all-trans-octaprenyl diphosphate + 4-hydroxybenzoate = 4-hydroxy-3-(all-trans-octaprenyl)benzoate + diphosphate. It functions in the pathway cofactor biosynthesis; ubiquinone biosynthesis. Functionally, catalyzes the prenylation of para-hydroxybenzoate (PHB) with an all-trans polyprenyl group. Mediates the second step in the final reaction sequence of ubiquinone-8 (UQ-8) biosynthesis, which is the condensation of the polyisoprenoid side chain with PHB, generating the first membrane-bound Q intermediate 3-octaprenyl-4-hydroxybenzoate. This chain is 4-hydroxybenzoate octaprenyltransferase, found in Burkholderia pseudomallei (strain 1106a).